A 241-amino-acid polypeptide reads, in one-letter code: Folate receptor alpha (241 aa).

A signal peptide spans 1-19; it reads MAWQMTQLLLLALVAAAWG. 8 disulfide bridges follow: Cys36–Cys64, Cys56–Cys104, Cys65–Cys108, Cys88–Cys174, Cys95–Cys145, Cys134–Cys208, Cys138–Cys188, and Cys151–Cys168. Asn68 carries N-linked (GlcNAc...) asparagine glycosylation. Residues Asp102, Tyr106, 123–127, 156–161, and Ser195 contribute to the folate site; these read WRKER and HKGWNW. Asn160 is a glycosylation site (N-linked (GlcNAc...) asparagine). Ser234 is lipidated: GPI-anchor amidated serine. A propeptide spans 235–241 (removed in mature form); that stretch reads GSTPQGI.

Belongs to the folate receptor family. The secreted form is derived from the membrane-bound form either by cleavage of the GPI anchor, or/and by proteolysis catalyzed by a metalloprotease. Detected in milk (at protein level).

The protein localises to the cell membrane. The protein resides in the apical cell membrane. It localises to the basolateral cell membrane. Its subcellular location is the secreted. It is found in the cytoplasmic vesicle. The protein localises to the clathrin-coated vesicle. The protein resides in the endosome. Its function is as follows. Binds to folate and reduced folic acid derivatives and mediates delivery of 5-methyltetrahydrofolate and folate analogs into the interior of cells. Has high affinity for folate and folic acid analogs at neutral pH. Exposure to slightly acidic pH after receptor endocytosis triggers a conformation change that strongly reduces its affinity for folates and mediates their release. Required for normal embryonic development and normal cell proliferation. The chain is Folate receptor alpha (FOLR1) from Bos taurus (Bovine).